The following is a 391-amino-acid chain: S-adenosylmethionine synthase (391 aa).

The segment at Met1 to Lys20 is disordered. His17 is a binding site for ATP. Asp19 is a Mg(2+) binding site. Glu45 is a binding site for K(+). L-methionine-binding residues include Glu58 and Gln102. The tract at residues Gln102–Ala112 is flexible loop. ATP contacts are provided by residues Asp169–Lys171, Lys235–Phe236, Asp244, Arg250–Lys251, Ala267, and Lys271. Asp244 is a binding site for L-methionine. Lys275 lines the L-methionine pocket.

The protein belongs to the AdoMet synthase family. In terms of assembly, homotetramer; dimer of dimers. Requires Mg(2+) as cofactor. K(+) is required as a cofactor.

It is found in the cytoplasm. The enzyme catalyses L-methionine + ATP + H2O = S-adenosyl-L-methionine + phosphate + diphosphate. Its pathway is amino-acid biosynthesis; S-adenosyl-L-methionine biosynthesis; S-adenosyl-L-methionine from L-methionine: step 1/1. Catalyzes the formation of S-adenosylmethionine (AdoMet) from methionine and ATP. The overall synthetic reaction is composed of two sequential steps, AdoMet formation and the subsequent tripolyphosphate hydrolysis which occurs prior to release of AdoMet from the enzyme. This chain is S-adenosylmethionine synthase, found in Methylorubrum populi (strain ATCC BAA-705 / NCIMB 13946 / BJ001) (Methylobacterium populi).